The chain runs to 247 residues: MERAEALTSSFIWRPNANANAEITPSCPRCGSSNTKFCYYNNYSLTQPRYFCKGCRRYWTKGGSLRNVPVGGGCRKSRRPKSSSGNNTKTSLTANSGNPGGGSPSIDLALVYANFLNPKPDESILQENCDLATTDFLVDNPTGTSMDPSWSMDINDGHHDHYINPVEHIVEECGYNGLPPFPGEELLSLDTNGVWSDALLIGHNHVDVGVTPVQAVHEPVVHFADESNDSTNLLFGSWSPFDFTADG.

The Dof-type zinc-finger motif lies at 25 to 79; it reads PSCPRCGSSNTKFCYYNNYSLTQPRYFCKGCRRYWTKGGSLRNVPVGGGCRKSRR. Positions 27, 30, 52, and 55 each coordinate Zn(2+). Residues 70–100 form a disordered region; the sequence is VGGGCRKSRRPKSSSGNNTKTSLTANSGNPG. A compositionally biased stretch (polar residues) spans 82–94; that stretch reads SSSGNNTKTSLTA.

Its subcellular location is the nucleus. Transcription factor that binds specifically to a 5'-AA[AG]G-3' consensus core sequence. The polypeptide is Dof zinc finger protein DOF3.5 (DOF3.5) (Arabidopsis thaliana (Mouse-ear cress)).